A 503-amino-acid chain; its full sequence is ATP synthase subunit alpha (503 aa).

Position 170–177 (170–177 (GDRKTGKT)) interacts with ATP.

This sequence belongs to the ATPase alpha/beta chains family. F-type ATPases have 2 components, CF(1) - the catalytic core - and CF(0) - the membrane proton channel. CF(1) has five subunits: alpha(3), beta(3), gamma(1), delta(1), epsilon(1). CF(0) has four main subunits: a(1), b(1), b'(1) and c(9-12).

Its subcellular location is the cellular thylakoid membrane. The enzyme catalyses ATP + H2O + 4 H(+)(in) = ADP + phosphate + 5 H(+)(out). In terms of biological role, produces ATP from ADP in the presence of a proton gradient across the membrane. The alpha chain is a regulatory subunit. This is ATP synthase subunit alpha from Synechocystis sp. (strain ATCC 27184 / PCC 6803 / Kazusa).